A 297-amino-acid chain; its full sequence is Tyrosine recombinase XerD (297 aa).

The 86-residue stretch at 1–86 folds into the Core-binding (CB) domain; the sequence is MKNLALIDLF…AMRKLFQYLY (86 aa). Positions 107-291 constitute a Tyr recombinase domain; the sequence is RLPKYLTEQQ…AKERLKRLHE (185 aa). Active-site residues include R147, K171, H243, R246, and H269. Residue Y278 is the O-(3'-phospho-DNA)-tyrosine intermediate of the active site.

It belongs to the 'phage' integrase family. XerD subfamily. As to quaternary structure, forms a cyclic heterotetrameric complex composed of two molecules of XerC and two molecules of XerD.

It is found in the cytoplasm. Site-specific tyrosine recombinase, which acts by catalyzing the cutting and rejoining of the recombining DNA molecules. The XerC-XerD complex is essential to convert dimers of the bacterial chromosome into monomers to permit their segregation at cell division. It also contributes to the segregational stability of plasmids. This is Tyrosine recombinase XerD from Haemophilus influenzae (strain ATCC 51907 / DSM 11121 / KW20 / Rd).